We begin with the raw amino-acid sequence, 210 residues long: ATP-dependent Clp protease proteolytic subunit (210 aa).

Serine 111 serves as the catalytic Nucleophile. Histidine 136 is a catalytic residue.

The protein belongs to the peptidase S14 family. In terms of assembly, fourteen ClpP subunits assemble into 2 heptameric rings which stack back to back to give a disk-like structure with a central cavity, resembling the structure of eukaryotic proteasomes.

It is found in the cytoplasm. The enzyme catalyses Hydrolysis of proteins to small peptides in the presence of ATP and magnesium. alpha-casein is the usual test substrate. In the absence of ATP, only oligopeptides shorter than five residues are hydrolyzed (such as succinyl-Leu-Tyr-|-NHMec, and Leu-Tyr-Leu-|-Tyr-Trp, in which cleavage of the -Tyr-|-Leu- and -Tyr-|-Trp bonds also occurs).. Cleaves peptides in various proteins in a process that requires ATP hydrolysis. Has a chymotrypsin-like activity. Plays a major role in the degradation of misfolded proteins. In Halorhodospira halophila (strain DSM 244 / SL1) (Ectothiorhodospira halophila (strain DSM 244 / SL1)), this protein is ATP-dependent Clp protease proteolytic subunit.